The following is a 247-amino-acid chain: Protein Thf1 (247 aa).

Residues 198–224 (IAQVRQAMDDILEAQKKRREADQAKKE) adopt a coiled-coil conformation. Residues 209 to 247 (LEAQKKRREADQAKKEGSDDTPTTEASTPDSEPTSEVSS) are disordered. The segment covering 210–226 (EAQKKRREADQAKKEGS) has biased composition (basic and acidic residues). Polar residues predominate over residues 228–247 (DTPTTEASTPDSEPTSEVSS).

Belongs to the THF1 family.

Its function is as follows. May be involved in photosynthetic membrane biogenesis. The polypeptide is Protein Thf1 (Acaryochloris marina (strain MBIC 11017)).